The following is a 1362-amino-acid chain: DNA-directed RNA polymerase subunit beta (1362 aa).

It belongs to the RNA polymerase beta chain family. In terms of assembly, the RNAP catalytic core consists of 2 alpha, 1 beta, 1 beta' and 1 omega subunit. When a sigma factor is associated with the core the holoenzyme is formed, which can initiate transcription.

It catalyses the reaction RNA(n) + a ribonucleoside 5'-triphosphate = RNA(n+1) + diphosphate. DNA-dependent RNA polymerase catalyzes the transcription of DNA into RNA using the four ribonucleoside triphosphates as substrates. In Acidithiobacillus ferrooxidans (strain ATCC 23270 / DSM 14882 / CIP 104768 / NCIMB 8455) (Ferrobacillus ferrooxidans (strain ATCC 23270)), this protein is DNA-directed RNA polymerase subunit beta.